Consider the following 324-residue polypeptide: Glyoxylate/hydroxypyruvate reductase B (324 aa).

Residues Arg-237 and Glu-266 contribute to the active site. The active-site Proton donor is His-285.

This sequence belongs to the D-isomer specific 2-hydroxyacid dehydrogenase family. GhrB subfamily. As to quaternary structure, homodimer.

Its subcellular location is the cytoplasm. It catalyses the reaction glycolate + NADP(+) = glyoxylate + NADPH + H(+). The catalysed reaction is (R)-glycerate + NAD(+) = 3-hydroxypyruvate + NADH + H(+). It carries out the reaction (R)-glycerate + NADP(+) = 3-hydroxypyruvate + NADPH + H(+). Its function is as follows. Catalyzes the NADPH-dependent reduction of glyoxylate and hydroxypyruvate into glycolate and glycerate, respectively. The protein is Glyoxylate/hydroxypyruvate reductase B of Salmonella gallinarum (strain 287/91 / NCTC 13346).